Reading from the N-terminus, the 292-residue chain is AKT-interacting protein (292 aa).

Residues 1 to 11 (MNPLWSMSSGS) are compositionally biased toward polar residues. A disordered region spans residues 1-64 (MNPLWSMSSG…SPAPAAQSTN (64 aa)). Basic and acidic residues predominate over residues 14-23 (KRAEGEEKTL). S30 carries the phosphoserine modification. The UBC core domain maps to 74–222 (YLEYSLLAEF…VVDSVKVCTA (149 aa)).

Belongs to the ubiquitin-conjugating enzyme family. FTS subfamily. In terms of assembly, component of the FTS/Hook/FHIP complex (FHF complex), composed of AKTIP/FTS, FHIP1B, and one or more members of the Hook family of proteins HOOK1, HOOK2, and HOOK3. Interacts directly with HOOK1, HOOK2 and HOOK3. The FHF complex associates with the homotypic vesicular sorting complex (the HOPS complex). Also interacts with AKT1. May interact with FHIP1A.

It is found in the cytoplasm. It localises to the cell membrane. Its function is as follows. Component of the FTS/Hook/FHIP complex (FHF complex). The FHF complex may function to promote vesicle trafficking and/or fusion via the homotypic vesicular protein sorting complex (the HOPS complex). Regulates apoptosis by enhancing phosphorylation and activation of AKT1. Increases release of TNFSF6 via the AKT1/GSK3B/NFATC1 signaling cascade. FHF complex promotes the distribution of AP-4 complex to the perinuclear area of the cell. The protein is AKT-interacting protein (Aktip) of Rattus norvegicus (Rat).